A 653-amino-acid polypeptide reads, in one-letter code: DNA-directed RNA polymerase III subunit RPC-3 (653 aa).

Disordered regions lie at residues 141–186, 280–309, and 422–442; these read INGV…DSDP, DSSA…DFSD, and IKED…KRRG. A compositionally biased stretch (basic and acidic residues) spans 159–170; the sequence is AENHTDHAHDYQ. Acidic residues-rich tracts occupy residues 293-309 and 424-433; these read PLED…DFSD and EDEDDEDEEG. Residues 580 to 601 are leucine-zipper; that stretch reads TYKSMSRCLQRIRVEREKLKFL.

The protein belongs to the RNA polymerase beta chain family. As to quaternary structure, component of the RNA polymerase III (Pol III) complex consisting of 17 subunits.

It is found in the nucleus. Its function is as follows. DNA-dependent RNA polymerase catalyzes the transcription of DNA into RNA using the four ribonucleoside triphosphates as substrates. Specific core component of RNA polymerase III which synthesizes small RNAs, such as 5S rRNA and tRNAs. The chain is DNA-directed RNA polymerase III subunit RPC-3 (RPC-82) from Coccidioides immitis (strain RS) (Valley fever fungus).